A 284-amino-acid chain; its full sequence is Nucleotide-binding protein NMCC_0698 (284 aa).

An ATP-binding site is contributed by 8–15 (GLSGSGKS). 58–61 (DVRS) lines the GTP pocket.

It belongs to the RapZ-like family.

In terms of biological role, displays ATPase and GTPase activities. The chain is Nucleotide-binding protein NMCC_0698 from Neisseria meningitidis serogroup C (strain 053442).